Reading from the N-terminus, the 484-residue chain is Coronin-1B (484 aa).

S2 is subject to Phosphoserine. WD repeat units follow at residues 80–120 (GHTG…LTSP), 130–170 (GHTK…ELYR), 174–213 (LHPD…LVAE), 217–260 (AHEG…EPMA), and 265–305 (DSSN…PYIH). The disordered stretch occupies residues 404–446 (LKVSRRNVLSDSRPASYSRSGASTATAVTDVPSGNLAGAGEAG). The segment covering 410–430 (NVLSDSRPASYSRSGASTATA) has biased composition (polar residues). A coiled-coil region spans residues 444–482 (EAGKLEEVMQELRALRMLVKEQGERISRLEEQLGRMENG).

It belongs to the WD repeat coronin family. As to quaternary structure, forms homooligomers, but does not form complexes with the other coronins. Interacts with Arp2/3 complex components, including ACTR2, ARPC1B and ARPC2. Binds actin. Post-translationally, phosphorylation on Ser-2 regulates the interaction with the Arp2/3 complex and cell motility in fibroblasts. Phosphorylation does not seem to affect subcellular location. In terms of tissue distribution, ubiquitous.

It localises to the cytoplasm. Its subcellular location is the cytoskeleton. The protein resides in the stress fiber. In terms of biological role, regulates leading edge dynamics and cell motility in fibroblasts. May be involved in cytokinesis and signal transduction. The polypeptide is Coronin-1B (Coro1b) (Mus musculus (Mouse)).